The chain runs to 269 residues: Serine/arginine-rich splicing factor 5 (269 aa).

Residues 4-74 (CRVFIGRLNP…ERVTIEHARA (71 aa)) enclose the RRM 1 domain. The interval 73–105 (RARSRGGRGRGRYSDRFSSRRPRNDRRNAPPVR) is disordered. The span at 74–83 (ARSRGGRGRG) shows a compositional bias: basic residues. At Ser-86 the chain carries Phosphoserine. The RRM 2 domain maps to 108–189 (NRLIVENLSS…SKRHRSRSRS (82 aa)). Lys-167 is modified (N6-acetyllysine). Positions 174–269 (IKLIEGSKRH…SRSRSVDSGN (96 aa)) are disordered. Positions 181–226 (KRHRSRSRSRSRTRSSSRSRSRSRSRRSKSYSRSRSRSRSRSKSRS) are enriched in basic residues. A phosphoserine mark is found at Ser-224, Ser-226, Ser-230, Ser-247, and Ser-250. Over residues 239–251 (RGSSSRSKSPASV) the composition is skewed to low complexity.

Belongs to the splicing factor SR family. In terms of assembly, found in a pre-mRNA splicing complex with SRSF4/SFRS4, SRSF5/SFRS5, SNRNP70, SNRPA1, SRRM1 and SRRM2. Interacts with RBMY; the interaction inhibits SRSF5 pre-mRNA splicing. Interacts (via RS domain) with PHF5A (via N-terminus). Extensively phosphorylated on serine residues in the RS domain.

The protein localises to the nucleus. In terms of biological role, may be required for progression through G1 and entry into S phase of cell growth. May play a regulatory role in pre-mRNA splicing. Autoregulates its own expression. Plays a role in constitutive splicing and can modulate the selection of alternative splice sites. The protein is Serine/arginine-rich splicing factor 5 (Srsf5) of Mus musculus (Mouse).